Here is a 461-residue protein sequence, read N- to C-terminus: Gram-negative bacteria-binding protein 2 (461 aa).

Residues 1–20 form the signal peptide; that stretch reads MRWEFLPCLLLLISNNKIFG. The CBM39 domain maps to 21 to 115; it reads FKVPSINFEM…TRVIINTRLL (95 aa). Residues asparagine 71, asparagine 170, asparagine 177, and asparagine 364 are each glycosylated (N-linked (GlcNAc...) asparagine). The 283-residue stretch at 179-461 folds into the GH16 domain; that stretch reads TTWKHDIRQR…VIDYVRVYAE (283 aa).

This sequence belongs to the insect beta-1,3-glucan binding protein family.

It is found in the secreted. Functionally, involved in the recognition of invading microorganisms. Binds specifically to beta-1,3-glucan and activates the phenoloxidase cascade. The protein is Gram-negative bacteria-binding protein 2 of Drosophila melanogaster (Fruit fly).